Consider the following 326-residue polypeptide: Fructose-1,6-bisphosphatase class 1 (326 aa).

It belongs to the FBPase class 1 family. As to quaternary structure, homotetramer.

The protein localises to the cytoplasm. The catalysed reaction is beta-D-fructose 1,6-bisphosphate + H2O = beta-D-fructose 6-phosphate + phosphate. Its pathway is carbohydrate biosynthesis; gluconeogenesis. This Methylobacterium sp. (strain 4-46) protein is Fructose-1,6-bisphosphatase class 1.